Here is a 328-residue protein sequence, read N- to C-terminus: Phosphate acetyltransferase (328 aa).

It belongs to the phosphate acetyltransferase and butyryltransferase family.

It localises to the cytoplasm. The enzyme catalyses acetyl-CoA + phosphate = acetyl phosphate + CoA. Its pathway is metabolic intermediate biosynthesis; acetyl-CoA biosynthesis; acetyl-CoA from acetate: step 2/2. This Thermoanaerobacterium thermosaccharolyticum (strain ATCC 7956 / DSM 571 / NCIMB 9385 / NCA 3814 / NCTC 13789 / WDCM 00135 / 2032) (Clostridium thermosaccharolyticum) protein is Phosphate acetyltransferase (pta).